The following is a 299-amino-acid chain: Protoheme IX farnesyltransferase 1 (299 aa).

Helical transmembrane passes span 24 to 44, 46 to 66, 97 to 117, 118 to 138, 146 to 166, 170 to 190, 217 to 237, 239 to 259, and 278 to 298; these read VVAL…PGVP, AAVV…AAMV, LLVA…CCNA, LTAW…TLLL, IVIG…AVNG, AFAL…FWAL, LSIV…VALG, AGAI…FLAV, and IWYL…LIPL.

It belongs to the UbiA prenyltransferase family. Protoheme IX farnesyltransferase subfamily.

It is found in the cell inner membrane. It carries out the reaction heme b + (2E,6E)-farnesyl diphosphate + H2O = Fe(II)-heme o + diphosphate. Its pathway is porphyrin-containing compound metabolism; heme O biosynthesis; heme O from protoheme: step 1/1. Its function is as follows. Converts heme B (protoheme IX) to heme O by substitution of the vinyl group on carbon 2 of heme B porphyrin ring with a hydroxyethyl farnesyl side group. The protein is Protoheme IX farnesyltransferase 1 of Chromobacterium violaceum (strain ATCC 12472 / DSM 30191 / JCM 1249 / CCUG 213 / NBRC 12614 / NCIMB 9131 / NCTC 9757 / MK).